Reading from the N-terminus, the 229-residue chain is Ribonuclease HII (229 aa).

The RNase H type-2 domain occupies 34 to 223; the sequence is WPVAGADEAG…LRKSEDGPEM (190 aa). A divalent metal cation is bound by residues Asp40, Glu41, and Asp131. The tract at residues 209–229 is disordered; it reads MSFRPLRKSEDGPEMDELIPE. Positions 220-229 are enriched in acidic residues; sequence GPEMDELIPE.

This sequence belongs to the RNase HII family. Requires Mn(2+) as cofactor. It depends on Mg(2+) as a cofactor.

The protein localises to the cytoplasm. It carries out the reaction Endonucleolytic cleavage to 5'-phosphomonoester.. Endonuclease that specifically degrades the RNA of RNA-DNA hybrids. The chain is Ribonuclease HII from Rhizobium etli (strain CIAT 652).